The sequence spans 225 residues: Orotidine 5'-phosphate decarboxylase (225 aa).

Substrate-binding positions include D9, K31, 58–67, T115, R176, Q184, G204, and R205; that span reads DLKLHDIPNT. The Proton donor role is filled by K60.

This sequence belongs to the OMP decarboxylase family. Type 1 subfamily. In terms of assembly, homodimer.

The enzyme catalyses orotidine 5'-phosphate + H(+) = UMP + CO2. It functions in the pathway pyrimidine metabolism; UMP biosynthesis via de novo pathway; UMP from orotate: step 2/2. In terms of biological role, catalyzes the decarboxylation of orotidine 5'-monophosphate (OMP) to uridine 5'-monophosphate (UMP). This chain is Orotidine 5'-phosphate decarboxylase, found in Wolbachia sp. subsp. Brugia malayi (strain TRS).